A 165-amino-acid chain; its full sequence is Interferon gamma (165 aa).

Positions 1-23 (MKYTSYILAFQLCIVLGSLGCYC) are cleaved as a signal peptide. A Pyrrolidone carboxylic acid modification is found at Gln24. Residues Asn48 and Asn120 are each glycosylated (N-linked (GlcNAc...) asparagine).

The protein belongs to the type II (or gamma) interferon family. As to quaternary structure, homodimer. Interacts with IFNGR1 (via extracellular domain); this interaction promotes IFNGR1 dimerization.

It localises to the secreted. Type II interferon produced by immune cells such as T-cells and NK cells that plays crucial roles in antimicrobial, antiviral, and antitumor responses by activating effector immune cells and enhancing antigen presentation. Primarily signals through the JAK-STAT pathway after interaction with its receptor IFNGR1 to affect gene regulation. Upon IFNG binding, IFNGR1 intracellular domain opens out to allow association of downstream signaling components JAK2, JAK1 and STAT1, leading to STAT1 activation, nuclear translocation and transcription of IFNG-regulated genes. Many of the induced genes are transcription factors such as IRF1 that are able to further drive regulation of a next wave of transcription. Plays a role in class I antigen presentation pathway by inducing a replacement of catalytic proteasome subunits with immunoproteasome subunits. In turn, increases the quantity, quality, and repertoire of peptides for class I MHC loading. Increases the efficiency of peptide generation also by inducing the expression of activator PA28 that associates with the proteasome and alters its proteolytic cleavage preference. Up-regulates as well MHC II complexes on the cell surface by promoting expression of several key molecules such as cathepsins B/CTSB, H/CTSH, and L/CTSL. Participates in the regulation of hematopoietic stem cells during development and under homeostatic conditions by affecting their development, quiescence, and differentiation. This is Interferon gamma (IFNG) from Papio anubis (Olive baboon).